A 200-amino-acid chain; its full sequence is Diadenylate cyclase (200 aa).

Residues 5–25 (ILLFITLIFLLLLFVFLIAFA) form a helical membrane-spanning segment. In terms of domain architecture, DAC spans 28-185 (NKRVRNYVVR…KGVIKTLSSN (158 aa)).

The protein belongs to the adenylate cyclase family. DacB/CdaS subfamily. Probably oligomerizes.

It is found in the cell membrane. It carries out the reaction 2 ATP = 3',3'-c-di-AMP + 2 diphosphate. In terms of biological role, catalyzes the condensation of 2 ATP molecules into cyclic di-AMP (c-di-AMP), a second messenger used to regulate differing processes in different bacteria. The sequence is that of Diadenylate cyclase from Mycoplasma genitalium (strain ATCC 33530 / DSM 19775 / NCTC 10195 / G37) (Mycoplasmoides genitalium).